The following is a 357-amino-acid chain: tRNA-specific 2-thiouridylase MnmA (357 aa).

ATP-binding positions include 3 to 10 (AMSGGVDS) and Leu-29. Cys-98 acts as the Nucleophile in catalysis. Cys-98 and Cys-196 are joined by a disulfide. Gly-122 is a binding site for ATP. Residues 146–148 (KDQ) form an interaction with tRNA region. The Cysteine persulfide intermediate role is filled by Cys-196. Residues 302 to 303 (RY) are interaction with tRNA.

It belongs to the MnmA/TRMU family.

It localises to the cytoplasm. It catalyses the reaction S-sulfanyl-L-cysteinyl-[protein] + uridine(34) in tRNA + AH2 + ATP = 2-thiouridine(34) in tRNA + L-cysteinyl-[protein] + A + AMP + diphosphate + H(+). Functionally, catalyzes the 2-thiolation of uridine at the wobble position (U34) of tRNA, leading to the formation of s(2)U34. This chain is tRNA-specific 2-thiouridylase MnmA, found in Moorella thermoacetica (strain ATCC 39073 / JCM 9320).